The following is a 202-amino-acid chain: ADP-ribosylation factor-like protein 15 (202 aa).

Residues 39–46, 82–86, and 142–145 contribute to the GTP site; these read GLTGSGKT, ELGGA, and NHQD.

The protein belongs to the small GTPase superfamily. Arf family.

The protein is ADP-ribosylation factor-like protein 15 (ARL15) of Bos taurus (Bovine).